Consider the following 405-residue polypeptide: Cystathionine gamma-lyase (405 aa).

R62, Y114, and R119 together coordinate substrate. K212 is subject to N6-(pyridoxal phosphate)lysine. Residue E339 participates in substrate binding.

It belongs to the trans-sulfuration enzymes family. Homotetramer. Interacts with CALM in a calcium-dependent manner. It depends on pyridoxal 5'-phosphate as a cofactor. Highly expressed in liver. Also in muscle and lower expression in most tissues except heart, pituitary gland, spleen, thymus, and vascular tissue, where it is hardly detected.

It localises to the cytoplasm. The catalysed reaction is L,L-cystathionine + H2O = 2-oxobutanoate + L-cysteine + NH4(+). It carries out the reaction L-cysteine + H2O = hydrogen sulfide + pyruvate + NH4(+) + H(+). The enzyme catalyses L-homocysteine + H2O = 2-oxobutanoate + hydrogen sulfide + NH4(+) + H(+). It catalyses the reaction L-homoserine = 2-oxobutanoate + NH4(+). The catalysed reaction is L-selenocystathionine + H2O = L-selenocysteine + 2-oxobutanoate + NH4(+). The protein operates within amino-acid biosynthesis; L-cysteine biosynthesis; L-cysteine from L-homocysteine and L-serine: step 2/2. Inhibited by propargylglycine, trifluoroalanine and aminoethoxyvinylglycine. Catalyzes the last step in the trans-sulfuration pathway from L-methionine to L-cysteine in a pyridoxal-5'-phosphate (PLP)-dependent manner, which consists on cleaving the L,L-cystathionine molecule into L-cysteine, ammonia and 2-oxobutanoate. Part of the L-cysteine derived from the trans-sulfuration pathway is utilized for biosynthesis of the ubiquitous antioxidant glutathione. Besides its role in the conversion of L-cystathionine into L-cysteine, it utilizes L-cysteine and L-homocysteine as substrates (at much lower rates than L,L-cystathionine) to produce the endogenous gaseous signaling molecule hydrogen sulfide (H2S). In vitro, it converts two L-cysteine molecules into lanthionine and H2S, also two L-homocysteine molecules to homolanthionine and H2S, which can be particularly relevant under conditions of severe hyperhomocysteinemia (which is a risk factor for cardiovascular disease, diabetes, and Alzheimer's disease). Lanthionine and homolanthionine are structural homologs of L,L-cystathionine that differ by the absence or presence of an extra methylene group, respectively. Acts as a cysteine-protein sulfhydrase by mediating sulfhydration of target proteins: sulfhydration consists of converting -SH groups into -SSH on specific cysteine residues of target proteins such as GAPDH, PTPN1 and NF-kappa-B subunit RELA, thereby regulating their function. By generating the gasotransmitter H2S, it participates in a number of physiological processes such as vasodilation, bone protection, and inflammation. Plays an essential role in myogenesis by contributing to the biogenesis of H2S in skeletal muscle tissue. Can also accept homoserine as substrate. Catalyzes the elimination of selenocystathionine (which can be derived from the diet) to yield selenocysteine, ammonia and 2-oxobutanoate. The chain is Cystathionine gamma-lyase (CTH) from Homo sapiens (Human).